A 512-amino-acid chain; its full sequence is 2-isopropylmalate synthase (512 aa).

The Pyruvate carboxyltransferase domain maps to 4-266; it reads IQFFDTTLRD…ETNIVLNQFK (263 aa). Mn(2+) contacts are provided by aspartate 13, histidine 201, histidine 203, and asparagine 237. Positions 390-512 are regulatory domain; the sequence is ELKHLQVQYV…SKQADFEEVK (123 aa).

This sequence belongs to the alpha-IPM synthase/homocitrate synthase family. LeuA type 1 subfamily. Homodimer. Mn(2+) serves as cofactor.

The protein localises to the cytoplasm. It carries out the reaction 3-methyl-2-oxobutanoate + acetyl-CoA + H2O = (2S)-2-isopropylmalate + CoA + H(+). The protein operates within amino-acid biosynthesis; L-leucine biosynthesis; L-leucine from 3-methyl-2-oxobutanoate: step 1/4. Catalyzes the condensation of the acetyl group of acetyl-CoA with 3-methyl-2-oxobutanoate (2-ketoisovalerate) to form 3-carboxy-3-hydroxy-4-methylpentanoate (2-isopropylmalate). The polypeptide is 2-isopropylmalate synthase (Listeria monocytogenes serotype 4b (strain CLIP80459)).